The following is a 613-amino-acid chain: tRNA 5-methylaminomethyl-2-thiouridine biosynthesis bifunctional protein MnmC (613 aa).

A tRNA (mnm(5)s(2)U34)-methyltransferase region spans residues 1-225; the sequence is MKKAKLIFKD…KREMIKAYLE (225 aa). The FAD-dependent cmnm(5)s(2)U34 oxidoreductase stretch occupies residues 252–613; the sequence is IGAGISSAVL…FLIRKLKKGL (362 aa).

It in the N-terminal section; belongs to the methyltransferase superfamily. tRNA (mnm(5)s(2)U34)-methyltransferase family. In the C-terminal section; belongs to the DAO family. FAD serves as cofactor.

The protein localises to the cytoplasm. The enzyme catalyses 5-aminomethyl-2-thiouridine(34) in tRNA + S-adenosyl-L-methionine = 5-methylaminomethyl-2-thiouridine(34) in tRNA + S-adenosyl-L-homocysteine + H(+). Catalyzes the last two steps in the biosynthesis of 5-methylaminomethyl-2-thiouridine (mnm(5)s(2)U) at the wobble position (U34) in tRNA. Catalyzes the FAD-dependent demodification of cmnm(5)s(2)U34 to nm(5)s(2)U34, followed by the transfer of a methyl group from S-adenosyl-L-methionine to nm(5)s(2)U34, to form mnm(5)s(2)U34. The sequence is that of tRNA 5-methylaminomethyl-2-thiouridine biosynthesis bifunctional protein MnmC from Campylobacter jejuni subsp. jejuni serotype O:2 (strain ATCC 700819 / NCTC 11168).